The primary structure comprises 312 residues: Olfactory receptor 10P22 (312 aa).

Residues 1-26 (MGDDNDTDITEFILLGFSGYGFLQGH) are Extracellular-facing. Asparagine 5 carries an N-linked (GlcNAc...) asparagine glycan. Residues 27–47 (LFWGVLCIYVVTLLGNSLIVL) form a helical membrane-spanning segment. The Cytoplasmic portion of the chain corresponds to 48–57 (LTLADSALHS). Residues 58–78 (PMYFFLRHFSVVEILYTTTIV) form a helical membrane-spanning segment. Residues 79–89 (PRMLADLRSSC) lie on the Extracellular side of the membrane. A helical transmembrane segment spans residues 90–110 (PTIPLASCFTQLYFFALFGIA). At 111–143 (ECCLLTAMAYDRYAAICCPLHYTTLMSQGTYTG) the chain is on the cytoplasmic side. A helical membrane pass occupies residues 144–164 (LVGASYLAGVISGTTHSIFIF). Residues 165–205 (TLPFRGAKTIHHFLCDILPVLRLATASTFWGEVGNLFVTIT) lie on the Extracellular side of the membrane. The helical transmembrane segment at 206–226 (FIFVPFLLIVASYACILVTIL) threads the bilayer. Residues 227–236 (GVATSQGRQK) are Cytoplasmic-facing. Residues 237–257 (LFSTCSSHLFVVILFFGTATV) form a helical membrane-spanning segment. Residues 258–271 (AYMRPQADSFGNTD) lie on the Extracellular side of the membrane. A helical membrane pass occupies residues 272-292 (QILTLVYTVVTPMCNPFVYSL). Topologically, residues 293–312 (RNKEVTGAMRRLMKRYLWGP) are cytoplasmic.

It belongs to the G-protein coupled receptor 1 family.

It is found in the cell membrane. In terms of biological role, odorant receptor. The polypeptide is Olfactory receptor 10P22 (Mus musculus (Mouse)).